Reading from the N-terminus, the 221-residue chain is 2-phospho-L-lactate guanylyltransferase (221 aa).

The protein belongs to the CofC family. In terms of assembly, homodimer.

The catalysed reaction is (2S)-2-phospholactate + GTP + H(+) = (2S)-lactyl-2-diphospho-5'-guanosine + diphosphate. It participates in cofactor biosynthesis; coenzyme F420 biosynthesis. Functionally, guanylyltransferase that catalyzes the activation of (2S)-2-phospholactate (2-PL) as (2S)-lactyl-2-diphospho-5'-guanosine, via the condensation of 2-PL with GTP. It is involved in the biosynthesis of coenzyme F420, a hydride carrier cofactor. This is 2-phospho-L-lactate guanylyltransferase from Methanothrix thermoacetophila (strain DSM 6194 / JCM 14653 / NBRC 101360 / PT) (Methanosaeta thermophila).